The following is a 123-amino-acid chain: Small ribosomal subunit protein uS13 (123 aa).

Residues 97-123 (PVRGQRTHTNAKTRKGRSKLPVAAKKK) are disordered.

It belongs to the universal ribosomal protein uS13 family. In terms of assembly, part of the 30S ribosomal subunit. Forms a loose heterodimer with protein S19. Forms two bridges to the 50S subunit in the 70S ribosome.

In terms of biological role, located at the top of the head of the 30S subunit, it contacts several helices of the 16S rRNA. In the 70S ribosome it contacts the 23S rRNA (bridge B1a) and protein L5 of the 50S subunit (bridge B1b), connecting the 2 subunits; these bridges are implicated in subunit movement. Contacts the tRNAs in the A and P-sites. In Ehrlichia chaffeensis (strain ATCC CRL-10679 / Arkansas), this protein is Small ribosomal subunit protein uS13.